We begin with the raw amino-acid sequence, 105 residues long: Large ribosomal subunit protein uL24 (105 aa).

This sequence belongs to the universal ribosomal protein uL24 family. In terms of assembly, part of the 50S ribosomal subunit.

Its function is as follows. One of two assembly initiator proteins, it binds directly to the 5'-end of the 23S rRNA, where it nucleates assembly of the 50S subunit. In terms of biological role, one of the proteins that surrounds the polypeptide exit tunnel on the outside of the subunit. This Nitrosomonas europaea (strain ATCC 19718 / CIP 103999 / KCTC 2705 / NBRC 14298) protein is Large ribosomal subunit protein uL24.